The sequence spans 80 residues: UPF0154 protein SH1564 (80 aa).

A helical membrane pass occupies residues 4-24; sequence WLAILLIIVALIGGLVGGFFL.

It belongs to the UPF0154 family.

The protein localises to the membrane. In Staphylococcus haemolyticus (strain JCSC1435), this protein is UPF0154 protein SH1564.